Consider the following 288-residue polypeptide: Cyclin-dependent kinase 2 homolog (288 aa).

The region spanning 4–284 (YHGLEKIGEG…AKEALQHAYF (281 aa)) is the Protein kinase domain. ATP-binding positions include 10 to 18 (IGEGTYGVV) and lysine 32. The residue at position 14 (threonine 14) is a Phosphothreonine. Tyrosine 15 carries the phosphotyrosine modification. Catalysis depends on aspartate 125, which acts as the Proton acceptor. Residue threonine 158 is modified to Phosphothreonine.

This sequence belongs to the protein kinase superfamily. CMGC Ser/Thr protein kinase family. CDC2/CDKX subfamily. As to quaternary structure, may form a complex composed of at least the catalytic subunit CRK2 and a cyclin. It depends on Mg(2+) as a cofactor.

The protein localises to the cytoplasm. It carries out the reaction L-seryl-[protein] + ATP = O-phospho-L-seryl-[protein] + ADP + H(+). It catalyses the reaction L-threonyl-[protein] + ATP = O-phospho-L-threonyl-[protein] + ADP + H(+). The catalysed reaction is [DNA-directed RNA polymerase] + ATP = phospho-[DNA-directed RNA polymerase] + ADP + H(+). With respect to regulation, phosphorylation at Thr-14 or Tyr-15 inactivates the enzyme, while phosphorylation at Thr-158 activates it. Its function is as follows. Serine/threonine-protein kinase. Involved in the control of the cell cycle. Required for entry into S-phase and mitosis. Probable component of the kinase complex that phosphorylates the repetitive C-terminus of RNA polymerase II. This chain is Cyclin-dependent kinase 2 homolog, found in Plasmodium knowlesi (strain H).